A 447-amino-acid chain; its full sequence is UPF0210 protein LCK_00974 (447 aa).

This sequence belongs to the UPF0210 family. In terms of assembly, homodimer.

The protein is UPF0210 protein LCK_00974 of Leuconostoc citreum (strain KM20).